A 300-amino-acid polypeptide reads, in one-letter code: Folate-binding protein 1 (300 aa).

The N-terminal stretch at 1 to 28 (MGRCLTKKVFLIQSPILFLHLLISLSSG) is a signal peptide. 5 disulfide bridges follow: Cys38-Cys76, Cys68-Cys111, Cys77-Cys114, Cys102-Cys139, and Cys132-Cys178. N-linked (GlcNAc...) asparagine glycosylation occurs at Asn173. A helical membrane pass occupies residues 238 to 258 (MTTIQKISLGMSFLIAGMFLI).

The protein belongs to the folate receptor family. Expressed in leaves.

The protein resides in the membrane. In terms of biological role, folic acid-binding protein involved in salicylic acid- (SA-) induced folate accumulation by triggering uptake and accumulation of folic acid in cells. May be implicated in the transport of the folates from the site of production (leaves) to the site of storage (fruits and seeds) and utilization (roots). The protein is Folate-binding protein 1 of Arabidopsis thaliana (Mouse-ear cress).